The chain runs to 452 residues: Putative purine permease CPE0397 (452 aa).

12 helical membrane-spanning segments follow: residues 34–54 (IFAA…SLGF), 58–78 (VTTA…IIQA), 83–103 (KVGA…SPAI), 108–128 (VLGL…EVIL), 138–158 (FFPP…LLPV), 172–192 (YASL…LLLN), 201–221 (SASI…LGLV), 250–270 (MAFI…LKAI), 326–346 (AVMA…AAII), 348–368 (GIPN…VAAA), 383–403 (LLII…PDVI), and 412–432 (MIFS…NAVL).

The protein belongs to the nucleobase:cation symporter-2 (NCS2) (TC 2.A.40) family.

The protein localises to the cell membrane. This chain is Putative purine permease CPE0397 (cpx), found in Clostridium perfringens (strain 13 / Type A).